The chain runs to 1101 residues: Selenocysteine insertion sequence-binding protein 2-like (1101 aa).

Disordered stretches follow at residues 154–206 (LGQV…AGPD), 240–295 (LWKS…PDSG), 320–387 (QKKP…SESL), 884–1010 (TSDG…ISVE), and 1030–1101 (TLQL…TQTT). Residues 255 to 265 (AESSSEQGASE) show a composition bias toward low complexity. A Phosphoserine modification is found at S276. The span at 327-346 (KNQTFSRGGRQTEQRNNSQV) shows a compositional bias: polar residues. 2 stretches are compositionally biased toward basic and acidic residues: residues 356 to 371 (SSER…DNKH) and 892 to 908 (ENEK…EKPS). Residues 925-939 (ATGSTTSATSAGKST) show a composition bias toward low complexity. The span at 940–950 (ASDKEEVKPDD) shows a compositional bias: basic and acidic residues. Positions 954–964 (ASQQSTETGSL) are enriched in polar residues. The span at 988 to 1002 (LEEEEDEDEEEEEDY) shows a compositional bias: acidic residues. The span at 1030 to 1039 (TLQLGKTLNG) shows a compositional bias: polar residues. Over residues 1040-1057 (SEEDNVEQSGEEEAEAPE) the composition is skewed to acidic residues. Positions 1070–1087 (ADQQASPGQQKSSNCSSL) are enriched in polar residues.

Binds SECIS (Sec insertion sequence) elements present on selenocysteine (Sec) protein mRNAs, but does not promote Sec incorporation into selenoproteins in vitro. In Homo sapiens (Human), this protein is Selenocysteine insertion sequence-binding protein 2-like (SECISBP2L).